The following is an 815-amino-acid chain: Phenylalanine--tRNA ligase beta subunit (815 aa).

Positions 39-148 constitute a tRNA-binding domain; sequence ATELQKFEVA…EYAVVGDNFT (110 aa). The B5 domain maps to 420–495; that stretch reads LQKIPLDFSV…RIYGYDKIES (76 aa). Residues Asp473, Asp479, Glu482, and Glu483 each contribute to the Mg(2+) site. One can recognise an FDX-ACB domain in the interval 721–814; sequence SDFQANFRDY…ISQKFQGTLR (94 aa).

This sequence belongs to the phenylalanyl-tRNA synthetase beta subunit family. Type 1 subfamily. In terms of assembly, tetramer of two alpha and two beta subunits. The cofactor is Mg(2+).

It is found in the cytoplasm. The enzyme catalyses tRNA(Phe) + L-phenylalanine + ATP = L-phenylalanyl-tRNA(Phe) + AMP + diphosphate + H(+). The polypeptide is Phenylalanine--tRNA ligase beta subunit (Rickettsia typhi (strain ATCC VR-144 / Wilmington)).